Consider the following 924-residue polypeptide: Lipoxygenase 7, chloroplastic (924 aa).

The transit peptide at 1–61 directs the protein to the chloroplast; the sequence is MLRPQLNPSS…GQGSSRVVVV (61 aa). The PLAT domain occupies 88 to 218; that stretch reads AVATIKVTVG…VGDEGTPSKR (131 aa). A Lipoxygenase domain is found at 225–924; it reads TYLPGQTPAG…GMGIPNSTSI (700 aa). Residues 231 to 315 form a disordered region; the sequence is TPAGLRSYRK…PKSETRKGNV (85 aa). 2 stretches are compositionally biased toward basic and acidic residues: residues 239–262 and 302–315; these read RKND…RVYD and SKKD…KGNV. Fe cation contacts are provided by His-581, His-586, His-773, Asn-777, and Ile-924.

This sequence belongs to the lipoxygenase family. Fe cation serves as cofactor.

The protein resides in the plastid. Its subcellular location is the chloroplast. It carries out the reaction (9Z,12Z)-octadecadienoate + O2 = (13S)-hydroperoxy-(9Z,11E)-octadecadienoate. The enzyme catalyses (9Z,12Z,15Z)-octadecatrienoate + O2 = (13S)-hydroperoxy-(9Z,11E,15Z)-octadecatrienoate. It functions in the pathway lipid metabolism; oxylipin biosynthesis. Functionally, plant lipoxygenase may be involved in a number of diverse aspects of plant physiology including growth and development, pest resistance, and senescence or responses to wounding. This lipoxygenase introduces molecular oxygen exclusively into the C-13 position of linoleic and linolenic acids. The polypeptide is Lipoxygenase 7, chloroplastic (CM-LOX1) (Oryza sativa subsp. japonica (Rice)).